Consider the following 151-residue polypeptide: NADPH-dependent 7-cyano-7-deazaguanine reductase (151 aa).

The Thioimide intermediate role is filled by C49. The active-site Proton donor is the D56. Residues 71-73 and 90-91 each bind substrate; these read IES and HE.

The protein belongs to the GTP cyclohydrolase I family. QueF type 1 subfamily.

The protein resides in the cytoplasm. It carries out the reaction 7-aminomethyl-7-carbaguanine + 2 NADP(+) = 7-cyano-7-deazaguanine + 2 NADPH + 3 H(+). Its pathway is tRNA modification; tRNA-queuosine biosynthesis. Catalyzes the NADPH-dependent reduction of 7-cyano-7-deazaguanine (preQ0) to 7-aminomethyl-7-deazaguanine (preQ1). The sequence is that of NADPH-dependent 7-cyano-7-deazaguanine reductase from Caulobacter vibrioides (strain ATCC 19089 / CIP 103742 / CB 15) (Caulobacter crescentus).